Reading from the N-terminus, the 492-residue chain is Probable cytosol aminopeptidase (492 aa).

2 residues coordinate Mn(2+): Lys259 and Asp264. Lys271 is a catalytic residue. 3 residues coordinate Mn(2+): Asp283, Asp342, and Glu344. Arg346 is a catalytic residue.

It belongs to the peptidase M17 family. Requires Mn(2+) as cofactor.

The protein resides in the cytoplasm. The enzyme catalyses Release of an N-terminal amino acid, Xaa-|-Yaa-, in which Xaa is preferably Leu, but may be other amino acids including Pro although not Arg or Lys, and Yaa may be Pro. Amino acid amides and methyl esters are also readily hydrolyzed, but rates on arylamides are exceedingly low.. The catalysed reaction is Release of an N-terminal amino acid, preferentially leucine, but not glutamic or aspartic acids.. Its function is as follows. Presumably involved in the processing and regular turnover of intracellular proteins. Catalyzes the removal of unsubstituted N-terminal amino acids from various peptides. This is Probable cytosol aminopeptidase (pepA) from Synechocystis sp. (strain ATCC 27184 / PCC 6803 / Kazusa).